The primary structure comprises 395 residues: MSDREEKLAAAKQRLLEVKKKKRQAKSKNSVAEDNVDRESNDGNNQVNEPTGNDNTQVVENTEDISASNVVSAEGAEASTGDASTQSPETSENVVKNSVDESVAEKPEKEDLAVIESEDKAAKPDGEIKKNVETEVTSRSTSSQEKDELEKQVKTLHDLNEQKDKKIKELKERINDLTYDYETLKANADDSEGKQTLVSKREAALEEFQSKLLIRENEINKRELKMNGKEDDLKKREKDLENRLLKVEEHEKSLNERATKLSEANENFNNRFKEFEEREKSAIKQNKEQSSEGSKTANQTHEQKELINSLEKKVSDIALEKQLLEEAVERYKLAMVEFAECQRRLKELEAMHFEQPGSVTEKLFPDPTNFEVIDNVSIDLTLTGFPGAHGIPFSV.

Disordered stretches follow at residues 17–155 (EVKK…QVKT) and 276–304 (EEREKSAIKQNKEQSSEGSKTANQTHEQK). Composition is skewed to polar residues over residues 42 to 71 (DGNNQVNEPTGNDNTQVVENTEDISASNVV) and 81 to 96 (GDASTQSPETSENVVK). Residues 103–133 (VAEKPEKEDLAVIESEDKAAKPDGEIKKNVE) show a composition bias toward basic and acidic residues. Positions 134–143 (TEVTSRSTSS) are enriched in low complexity. Composition is skewed to basic and acidic residues over residues 144–155 (QEKDELEKQVKT) and 276–290 (EEREKSAIKQNKEQS). Residues 224–351 (LKMNGKEDDL…QRRLKELEAM (128 aa)) are a coiled coil. Positions 291–300 (SEGSKTANQT) are enriched in polar residues.

The protein resides in the cytoplasm. This is an uncharacterized protein from Schizosaccharomyces pombe (strain 972 / ATCC 24843) (Fission yeast).